Here is a 207-residue protein sequence, read N- to C-terminus: Superoxide dismutase [Mn] (207 aa).

4 residues coordinate Mn(2+): H28, H76, D160, and H164.

It belongs to the iron/manganese superoxide dismutase family. The cofactor is Mn(2+).

It catalyses the reaction 2 superoxide + 2 H(+) = H2O2 + O2. Its function is as follows. Destroys superoxide anion radicals which are normally produced within the cells and which are toxic to biological systems. The polypeptide is Superoxide dismutase [Mn] (sodA) (Mycobacterium intracellulare (strain ATCC 13950 / DSM 43223 / JCM 6384 / NCTC 13025 / 3600)).